The primary structure comprises 417 residues: Serine hydroxymethyltransferase (417 aa).

(6S)-5,6,7,8-tetrahydrofolate-binding positions include Leu-117 and 121 to 123 (GHL). An N6-(pyridoxal phosphate)lysine modification is found at Lys-226.

Belongs to the SHMT family. Homodimer. Requires pyridoxal 5'-phosphate as cofactor.

The protein resides in the cytoplasm. It catalyses the reaction (6R)-5,10-methylene-5,6,7,8-tetrahydrofolate + glycine + H2O = (6S)-5,6,7,8-tetrahydrofolate + L-serine. Its pathway is one-carbon metabolism; tetrahydrofolate interconversion. It participates in amino-acid biosynthesis; glycine biosynthesis; glycine from L-serine: step 1/1. Functionally, catalyzes the reversible interconversion of serine and glycine with tetrahydrofolate (THF) serving as the one-carbon carrier. This reaction serves as the major source of one-carbon groups required for the biosynthesis of purines, thymidylate, methionine, and other important biomolecules. Also exhibits THF-independent aldolase activity toward beta-hydroxyamino acids, producing glycine and aldehydes, via a retro-aldol mechanism. This Shouchella clausii (strain KSM-K16) (Alkalihalobacillus clausii) protein is Serine hydroxymethyltransferase.